The primary structure comprises 132 residues: uncharacterized protein (132 aa).

Transmembrane regions (helical) follow at residues 7–29 (LALLSFFLGLGSFFSFYVAPTLF), 44–62 (VFPVYFGLGIILVGISLFL), 69–88 (LFLSLGILNLLLLLLQEFIV), and 108–130 (GVSMGINLAILLLTLGKVLILIF).

It is found in the cell membrane. This is an uncharacterized protein from Aquifex aeolicus (strain VF5).